Here is a 245-residue protein sequence, read N- to C-terminus: 1-(5-phosphoribosyl)-5-[(5-phosphoribosylamino)methylideneamino] imidazole-4-carboxamide isomerase (245 aa).

D8 serves as the catalytic Proton acceptor. D131 functions as the Proton donor in the catalytic mechanism.

It belongs to the HisA/HisF family.

The protein localises to the cytoplasm. The catalysed reaction is 1-(5-phospho-beta-D-ribosyl)-5-[(5-phospho-beta-D-ribosylamino)methylideneamino]imidazole-4-carboxamide = 5-[(5-phospho-1-deoxy-D-ribulos-1-ylimino)methylamino]-1-(5-phospho-beta-D-ribosyl)imidazole-4-carboxamide. It participates in amino-acid biosynthesis; L-histidine biosynthesis; L-histidine from 5-phospho-alpha-D-ribose 1-diphosphate: step 4/9. The polypeptide is 1-(5-phosphoribosyl)-5-[(5-phosphoribosylamino)methylideneamino] imidazole-4-carboxamide isomerase (Verminephrobacter eiseniae (strain EF01-2)).